The following is a 281-amino-acid chain: Sulfur carrier protein FdhD (281 aa).

Cys117 acts as the Cysteine persulfide intermediate in catalysis.

This sequence belongs to the FdhD family.

The protein localises to the cytoplasm. Functionally, required for formate dehydrogenase (FDH) activity. Acts as a sulfur carrier protein that transfers sulfur from IscS to the molybdenum cofactor prior to its insertion into FDH. The polypeptide is Sulfur carrier protein FdhD (Xanthomonas axonopodis pv. citri (strain 306)).